Here is a 177-residue protein sequence, read N- to C-terminus: uncharacterized protein (177 aa).

It to B.subtilis YutG.

This is an uncharacterized protein from Bacillus subtilis (strain 168).